We begin with the raw amino-acid sequence, 397 residues long: Protein RecA (397 aa).

The interval 1–23 (MALETKPAKDPAAEDKHELDPKR) is disordered. Residue 83–90 (GPESSGKT) participates in ATP binding.

Belongs to the RecA family.

It localises to the cytoplasm. In terms of biological role, can catalyze the hydrolysis of ATP in the presence of single-stranded DNA, the ATP-dependent uptake of single-stranded DNA by duplex DNA, and the ATP-dependent hybridization of homologous single-stranded DNAs. It interacts with LexA causing its activation and leading to its autocatalytic cleavage. The chain is Protein RecA from Bifidobacterium longum (strain NCC 2705).